We begin with the raw amino-acid sequence, 111 residues long: Large ribosomal subunit protein uL22 (111 aa).

It belongs to the universal ribosomal protein uL22 family. In terms of assembly, part of the 50S ribosomal subunit.

Its function is as follows. This protein binds specifically to 23S rRNA; its binding is stimulated by other ribosomal proteins, e.g. L4, L17, and L20. It is important during the early stages of 50S assembly. It makes multiple contacts with different domains of the 23S rRNA in the assembled 50S subunit and ribosome. In terms of biological role, the globular domain of the protein is located near the polypeptide exit tunnel on the outside of the subunit, while an extended beta-hairpin is found that lines the wall of the exit tunnel in the center of the 70S ribosome. The sequence is that of Large ribosomal subunit protein uL22 from Acholeplasma laidlawii (strain PG-8A).